Reading from the N-terminus, the 53-residue chain is Conotoxin Bu27 (53 aa).

A propeptide spanning residues 1–12 (ASDGRNAVVHER) is cleaved from the precursor. A 4-hydroxyproline modification is found at Pro14. Residue Glu15 is modified to 4-carboxyglutamate. Residues Thr19 and Thr21 are each glycosylated (O-linked (HexNAc...) threonine). 4-hydroxyproline occurs at positions 29, 34, 35, 43, 44, and 48. Position 48 is a proline amide (Pro48). Residues 49–53 (GRRND) constitute a propeptide that is removed on maturation.

Belongs to the conotoxin A superfamily. Contains 3 disulfide bonds. In terms of tissue distribution, expressed by the venom duct.

The protein localises to the secreted. In terms of biological role, probable neurotoxin with ion channel inhibitor activity. This Conus bullatus (Bubble cone) protein is Conotoxin Bu27.